A 254-amino-acid polypeptide reads, in one-letter code: Adenosylcobinamide-GDP ribazoletransferase (254 aa).

Transmembrane regions (helical) follow at residues 27–47, 50–70, 104–124, 131–151, 170–190, 194–214, and 233–253; these read SSLYWFPVVGLVIGGIVVLFA, GMGAGWPELAAVLALLGGFIL, VGSFGSLALIGVMLFKWICLL, AYGMIAAGVVLSRTAQVLLAA, AGWPHLLVASVSGVVLLFVLL, VVPSSILLFGSVVALFFVGWL, and LVEIAVWFVAALWLKGLFSAI.

It belongs to the CobS family. Mg(2+) serves as cofactor.

It is found in the cell inner membrane. It catalyses the reaction alpha-ribazole + adenosylcob(III)inamide-GDP = adenosylcob(III)alamin + GMP + H(+). The enzyme catalyses alpha-ribazole 5'-phosphate + adenosylcob(III)inamide-GDP = adenosylcob(III)alamin 5'-phosphate + GMP + H(+). It participates in cofactor biosynthesis; adenosylcobalamin biosynthesis; adenosylcobalamin from cob(II)yrinate a,c-diamide: step 7/7. Joins adenosylcobinamide-GDP and alpha-ribazole to generate adenosylcobalamin (Ado-cobalamin). Also synthesizes adenosylcobalamin 5'-phosphate from adenosylcobinamide-GDP and alpha-ribazole 5'-phosphate. The protein is Adenosylcobinamide-GDP ribazoletransferase of Chlorobaculum parvum (strain DSM 263 / NCIMB 8327) (Chlorobium vibrioforme subsp. thiosulfatophilum).